The sequence spans 283 residues: Elongation factor Ts (283 aa).

The segment at 79–82 is involved in Mg(2+) ion dislocation from EF-Tu; sequence TDFV.

Belongs to the EF-Ts family.

The protein localises to the cytoplasm. Associates with the EF-Tu.GDP complex and induces the exchange of GDP to GTP. It remains bound to the aminoacyl-tRNA.EF-Tu.GTP complex up to the GTP hydrolysis stage on the ribosome. The protein is Elongation factor Ts of Pseudoalteromonas translucida (strain TAC 125).